We begin with the raw amino-acid sequence, 432 residues long: E3 ubiquitin-protein ligase ATL42 (432 aa).

Residues 1–18 form the signal peptide; sequence MYQIFFFFLPLLHSYASA. Residues 37 to 57 form a helical membrane-spanning segment; that stretch reads LAVVTGVLAIMFALTFVLLVY. The RING-type; atypical zinc-finger motif lies at 123–165; the sequence is CSVCLSKFESVEILRLLPKCRHAFHIGCIDQWLEQHATCPLCR.

This sequence belongs to the RING-type zinc finger family. ATL subfamily.

Its subcellular location is the membrane. The enzyme catalyses S-ubiquitinyl-[E2 ubiquitin-conjugating enzyme]-L-cysteine + [acceptor protein]-L-lysine = [E2 ubiquitin-conjugating enzyme]-L-cysteine + N(6)-ubiquitinyl-[acceptor protein]-L-lysine.. Its pathway is protein modification; protein ubiquitination. E3 ubiquitin-protein ligase able to catalyze polyubiquitination with ubiquitin-conjugating enzyme E2 UBC8 in vitro. The sequence is that of E3 ubiquitin-protein ligase ATL42 (ATL42) from Arabidopsis thaliana (Mouse-ear cress).